The primary structure comprises 565 residues: Nephronectin (565 aa).

A signal peptide spans 1–19 (MDFLLALVLVSSLYLQAAA). Residues 52–87 (SWGQCQPVCQPRCKHGECIGPNKCKCHPGYAGKTCN) form the EGF-like 1 domain. Cystine bridges form between Cys-56/Cys-69, Cys-60/Cys-75, Cys-77/Cys-86, Cys-93/Cys-104, Cys-100/Cys-113, and Cys-115/Cys-127. An EGF-like 2; calcium-binding domain is found at 89-128 (DLNECGLKPRPCKHRCMNTYGSYKCYCLNGYMLMPDGSCS). An EGF-like 3 domain is found at 132-168 (TCSMANCQYGCDVVKGQIRCQCPSPGLQLAPDGRTCV). An EGF-like 4; calcium-binding domain is found at 169–213 (DVDECATGRASCPRFRQCVNTFGSYICKCHKGFNLMYIGGKYQCH). Disulfide bonds link Cys-173–Cys-186, Cys-180–Cys-195, Cys-197–Cys-212, Cys-218–Cys-231, Cys-225–Cys-240, and Cys-242–Cys-253. Residues 214–254 (DIDECSLGQYQCSSFARCYNIHGSYKCKCKEGYQGDGLTCV) enclose the EGF-like 5; calcium-binding domain. A disordered region spans residues 301–373 (YIPPIITNRP…PPGGITVDNR (73 aa)). The span at 304–316 (PIITNRPTSKPTT) shows a compositional bias: low complexity. A compositionally biased stretch (pro residues) spans 317 to 349 (RPTPKPTPIPTPPPPPPLPTELRTPLPPTTPER). Positions 382 to 384 (RGD) match the Integrin interaction motif. Positions 420-563 (HSCNFDHGLC…VSLKKGHCSE (144 aa)) constitute an MAM domain.

This sequence belongs to the nephronectin family. In terms of assembly, homodimer and homotrimer.

It localises to the secreted. Its subcellular location is the extracellular space. The protein localises to the extracellular matrix. In terms of biological role, functional ligand of integrin alpha-8/beta-1 in kidney development. Regulates the expression of GDNF with integrin alpha-8/beta-1 which is essential for kidney development. May also play a role in the development and function of various tissues, regulating cell adhesion, spreading and survival through the binding of several integrins. The protein is Nephronectin (NPNT) of Pongo abelii (Sumatran orangutan).